Consider the following 238-residue polypeptide: Orotidine 5'-phosphate decarboxylase (238 aa).

Substrate is bound by residues Asp10, Lys32, 59-68 (DLKLHDIPNT), Thr122, Arg184, Gln193, Gly213, and Arg214. Residue Lys61 is the Proton donor of the active site.

It belongs to the OMP decarboxylase family. Type 1 subfamily. Homodimer.

It catalyses the reaction orotidine 5'-phosphate + H(+) = UMP + CO2. It functions in the pathway pyrimidine metabolism; UMP biosynthesis via de novo pathway; UMP from orotate: step 2/2. Its function is as follows. Catalyzes the decarboxylation of orotidine 5'-monophosphate (OMP) to uridine 5'-monophosphate (UMP). The chain is Orotidine 5'-phosphate decarboxylase from Bacillus cytotoxicus (strain DSM 22905 / CIP 110041 / 391-98 / NVH 391-98).